A 427-amino-acid chain; its full sequence is Enolase (427 aa).

Gln-163 provides a ligand contact to (2R)-2-phosphoglycerate. Residue Glu-205 is the Proton donor of the active site. Mg(2+)-binding residues include Asp-242, Glu-285, and Asp-312. Lys-337, Arg-366, Ser-367, and Lys-388 together coordinate (2R)-2-phosphoglycerate. Lys-337 (proton acceptor) is an active-site residue.

This sequence belongs to the enolase family. The cofactor is Mg(2+).

Its subcellular location is the cytoplasm. The protein localises to the secreted. It is found in the cell surface. The catalysed reaction is (2R)-2-phosphoglycerate = phosphoenolpyruvate + H2O. Its pathway is carbohydrate degradation; glycolysis; pyruvate from D-glyceraldehyde 3-phosphate: step 4/5. In terms of biological role, catalyzes the reversible conversion of 2-phosphoglycerate (2-PG) into phosphoenolpyruvate (PEP). It is essential for the degradation of carbohydrates via glycolysis. The sequence is that of Enolase from Janthinobacterium sp. (strain Marseille) (Minibacterium massiliensis).